An 861-amino-acid chain; its full sequence is Cone cGMP-specific 3',5'-cyclic phosphodiesterase subunit alpha' (861 aa).

2 consecutive GAF domains span residues 75–224 and 256–433; these read SAEQ…AVAL and DVER…GWSL. Residues Ser97, Asn116, 169–172, and Thr176 each bind 3',5'-cyclic GMP; that span reads DKQT. The PDEase domain maps to 486 to 819; it reads EERQLLAILK…VEWKSLAEEY (334 aa). The active-site Proton donor is His562. 4 residues coordinate a divalent metal cation: His566, His602, Asp603, and Asp723. Residues 826–839 show a composition bias toward basic and acidic residues; that stretch reads TEEEAGKQEEEASD. The segment at 826-861 is disordered; sequence TEEEAGKQEEEASDGKAATDLGGSAEDKKSKTCLML. Cys858 carries the post-translational modification Cysteine methyl ester. Cys858 carries the S-geranylgeranyl cysteine lipid modification. Residues 859 to 861 constitute a propeptide, removed in mature form; the sequence is LML.

It belongs to the cyclic nucleotide phosphodiesterase family. As to quaternary structure, composed of two alpha' subunits that are associated with 3 smaller proteins of 11, 13, and 15 kDa. A divalent metal cation is required as a cofactor.

It localises to the cell membrane. The enzyme catalyses 3',5'-cyclic GMP + H2O = GMP + H(+). In terms of biological role, as cone-specific cGMP phosphodiesterase, it plays an essential role in light detection and cone phototransduction by rapidly decreasing intracellular levels of cGMP. In Mus musculus (Mouse), this protein is Cone cGMP-specific 3',5'-cyclic phosphodiesterase subunit alpha' (Pde6c).